Here is a 152-residue protein sequence, read N- to C-terminus: Serglycin (152 aa).

A signal peptide spans 1–25; it reads MQVPVGSRLVLALAFVLVWGSSVQG. The propeptide at 26 to 74 is activation peptide; it reads YPARRARYQWVRCKPNGFFANCIEEKGPQFDLIDESNNIGPPMNNPVLM. Cys38 and Cys47 form a disulfide bridge. A disordered region spans residues 66-115; it reads PPMNNPVLMEGPSKDFISNYDDYGSGSGSGSGSGSGSGSGSGSGFLGDME. 10 repeat units span residues 89-90, 91-92, 93-94, 95-96, 97-98, 99-100, 101-102, 103-104, 105-106, and 107-108. Positions 89 to 108 are 10 X 2 AA tandem repeats of G-S; the sequence is GSGSGSGSGSGSGSGSGSGS. Gly residues predominate over residues 90–110; sequence SGSGSGSGSGSGSGSGSGSGF. Residues Ser92 and Ser94 are each glycosylated (O-linked (Xyl...) (glycosaminoglycan) serine). Ser98, Ser100, Ser102, Ser104, Ser106, and Ser108 each carry an O-linked (Xyl...) (glycosaminoglycan) serine glycan.

Belongs to the serglycin family. Binds to activated CD44 and to GZMB. In terms of processing, O-glycosylated; contains chondroitin sulfate and heparan sulfate.

Its subcellular location is the cytoplasmic granule. The protein resides in the cytolytic granule. It is found in the secreted. It localises to the extracellular space. The protein localises to the golgi apparatus. Plays a role in formation of mast cell secretory granules and mediates storage of various compounds in secretory vesicles. Required for storage of some proteases in both connective tissue and mucosal mast cells and for storage of granzyme B in T-lymphocytes. Plays a role in localizing neutrophil elastase in azurophil granules of neutrophils. Mediates processing of MMP2. Plays a role in cytotoxic cell granule-mediated apoptosis by forming a complex with granzyme B which is delivered to cells by perforin to induce apoptosis. Regulates the secretion of TNF-alpha and may also regulate protease secretion. Inhibits bone mineralization. The protein is Serglycin (Srgn) of Mus musculus (Mouse).